Consider the following 446-residue polypeptide: MVGGGALRRVGKYEVGRTIGEGTFAKVKFAQNTESGESVAMKVVDRSSILKHKMADQIKREISIMKLVRHPNVVRLHEVLASRKKIFIILEFITGGELFDKIIRHGRLNEADARRYFQQLIDGVDFCHSKGVYHRDLKPENLLLDSQGNLKISDFGLSAWPAQGGALLRTTCGTPNYVAPEVLSHKGYDGALADTWSCGVILYVLLAGYLPFDEVDLTTLYGKIESAEYSFPAWFPNGAKSLIHRILDPNPDKRIRIEEIRNDEWFKKNYEPTREIESEEVNLDDVNAAFDDPEEDADHTLDDEAGPLTLNAFDLIILSQGLNLAALFDRRQDYDKLQNRFLSRKPAKVIMSSMEVVAQSMGYKTHIRNYKMRVEGLNANKTSHLAVMLEIFEVAPSIFMIELQRAAGDTSDYNKFINNYCSKLDDIIWNFPIEKSKSRISRLSKR.

The 254-residue stretch at 13–266 (YEVGRTIGEG…IEEIRNDEWF (254 aa)) folds into the Protein kinase domain. ATP is bound by residues 19–27 (IGEGTFAKV) and K42. D136 functions as the Proton acceptor in the catalytic mechanism. Residues 154–181 (DFGLSAWPAQGGALLRTTCGTPNYVAPE) are activation loop. The 29-residue stretch at 301 to 329 (LDDEAGPLTLNAFDLIILSQGLNLAALFD) folds into the NAF domain. Positions 336–365 (KLQNRFLSRKPAKVIMSSMEVVAQSMGYKT) are PPI.

This sequence belongs to the protein kinase superfamily. CAMK Ser/Thr protein kinase family. SNF1 subfamily. Mn(2+) is required as a cofactor.

The enzyme catalyses L-seryl-[protein] + ATP = O-phospho-L-seryl-[protein] + ADP + H(+). The catalysed reaction is L-threonyl-[protein] + ATP = O-phospho-L-threonyl-[protein] + ADP + H(+). In terms of biological role, CIPK serine-threonine protein kinases interact with CBL proteins. Binding of a CBL protein to the regulatory NAF domain of CIPK protein lead to the activation of the kinase in a calcium-dependent manner. This is CBL-interacting protein kinase 8 (CIPK8) from Oryza sativa subsp. japonica (Rice).